Here is a 114-residue protein sequence, read N- to C-terminus: NADH-ubiquinone oxidoreductase chain 3 (114 aa).

3 helical membrane-spanning segments follow: residues 1–21 (MIFYLHITIFLVVCLLMMLFF), 55–75 (FFFVGIVFLIFDVEIVVILPF), and 85–105 (MFVFSFTFINFLIVLGLLYEF).

Belongs to the complex I subunit 3 family.

It is found in the mitochondrion membrane. It catalyses the reaction a ubiquinone + NADH + 5 H(+)(in) = a ubiquinol + NAD(+) + 4 H(+)(out). Functionally, core subunit of the mitochondrial membrane respiratory chain NADH dehydrogenase (Complex I) that is believed to belong to the minimal assembly required for catalysis. Complex I functions in the transfer of electrons from NADH to the respiratory chain. The immediate electron acceptor for the enzyme is believed to be ubiquinone. This Rhipicephalus sanguineus (Brown dog tick) protein is NADH-ubiquinone oxidoreductase chain 3 (ND3).